The following is a 458-amino-acid chain: tRNA-2-methylthio-N(6)-dimethylallyladenosine synthase (458 aa).

One can recognise an MTTase N-terminal domain in the interval 2–118 (PKLYIKTYGC…VFEHVDGILR (117 aa)). Residues Cys-11, Cys-47, Cys-81, Cys-170, Cys-174, and Cys-177 each coordinate [4Fe-4S] cluster. In terms of domain architecture, Radical SAM core spans 156-389 (PGVRSTAYVS…LAVVNEIAIR (234 aa)). Residues 392–455 (RDLVGTVQEV…GFTLYGVPCP (64 aa)) enclose the TRAM domain.

Belongs to the methylthiotransferase family. MiaB subfamily. As to quaternary structure, monomer. Requires [4Fe-4S] cluster as cofactor.

The protein resides in the cytoplasm. It carries out the reaction N(6)-dimethylallyladenosine(37) in tRNA + (sulfur carrier)-SH + AH2 + 2 S-adenosyl-L-methionine = 2-methylsulfanyl-N(6)-dimethylallyladenosine(37) in tRNA + (sulfur carrier)-H + 5'-deoxyadenosine + L-methionine + A + S-adenosyl-L-homocysteine + 2 H(+). Functionally, catalyzes the methylthiolation of N6-(dimethylallyl)adenosine (i(6)A), leading to the formation of 2-methylthio-N6-(dimethylallyl)adenosine (ms(2)i(6)A) at position 37 in tRNAs that read codons beginning with uridine. The sequence is that of tRNA-2-methylthio-N(6)-dimethylallyladenosine synthase from Akkermansia muciniphila (strain ATCC BAA-835 / DSM 22959 / JCM 33894 / BCRC 81048 / CCUG 64013 / CIP 107961 / Muc).